The sequence spans 667 residues: MEKEAAKRRVEQLHALINKYNYEYHTLDDPSVPDSEYDKLMKELIALEEEHPDLKTPDSPSQRVGGAVLDAFQKVQHKTPMLSLGNAFNEEDLRDFDRRVRQAVGDVEYNVEFKIDGLAVSLRYENGVFVRGATRGDGTTGEDITENLKTIRNIPLRMKRDLSIEVRGEAFMPKRSFELLNKARIERDEEPFANPRNAAAGSLRQLDPKIAAKRNLDIFVYSIAELDEMGVETQSQGLDFLDELGFKTNHERKKCSTIEEVIEIVEELKTKRADLPYEIDGIVIKVDSLDQQEELGFTAKSPRWAIAYKFPAEEVVTTLLDIELSVGRTGAVTPTAILEPVKVAGTTVQRASLHNEDLIKEKDIRLLDKVVVKKAGDIIPEVVNVLVEQRTGKEKEFNMPKECPECGSELVRIEGEVALRCINPECPAQIREGLIHFVSRNAMNIDGLGERVITQLFREDLVHNVADLYKLTREQLINLERMGEKSTDNLLNSIEKSKKNSLERLLFGLGIRFIGAKAAKTLAMHFETLDKLKKATKEELIEVDEIGDKMADALVTYFEKEEILKLLDELEELGVNTVYKGPKKAAAEASDSYFAGKTIVLTGKLSEMSRNDAKAEIEALGGKITGSVSKKTDLVIAGEAAGSKLAKAEDLNIEVWDEARLISELKK.

NAD(+) contacts are provided by residues 34-38 (DSEYD), 83-84 (SL), and glutamate 112. Lysine 114 (N6-AMP-lysine intermediate) is an active-site residue. Positions 135, 169, 285, and 309 each coordinate NAD(+). The Zn(2+) site is built by cysteine 403, cysteine 406, cysteine 421, and cysteine 426. One can recognise a BRCT domain in the interval 589-667 (ASDSYFAGKT…EARLISELKK (79 aa)).

Belongs to the NAD-dependent DNA ligase family. LigA subfamily. The cofactor is Mg(2+). Requires Mn(2+) as cofactor.

It carries out the reaction NAD(+) + (deoxyribonucleotide)n-3'-hydroxyl + 5'-phospho-(deoxyribonucleotide)m = (deoxyribonucleotide)n+m + AMP + beta-nicotinamide D-nucleotide.. Functionally, DNA ligase that catalyzes the formation of phosphodiester linkages between 5'-phosphoryl and 3'-hydroxyl groups in double-stranded DNA using NAD as a coenzyme and as the energy source for the reaction. It is essential for DNA replication and repair of damaged DNA. This chain is DNA ligase, found in Bacillus licheniformis (strain ATCC 14580 / DSM 13 / JCM 2505 / CCUG 7422 / NBRC 12200 / NCIMB 9375 / NCTC 10341 / NRRL NRS-1264 / Gibson 46).